We begin with the raw amino-acid sequence, 156 residues long: Small ribosomal subunit protein uS7 (156 aa).

This sequence belongs to the universal ribosomal protein uS7 family. Part of the 30S ribosomal subunit. Contacts proteins S9 and S11.

One of the primary rRNA binding proteins, it binds directly to 16S rRNA where it nucleates assembly of the head domain of the 30S subunit. Is located at the subunit interface close to the decoding center, probably blocks exit of the E-site tRNA. This chain is Small ribosomal subunit protein uS7, found in Erwinia tasmaniensis (strain DSM 17950 / CFBP 7177 / CIP 109463 / NCPPB 4357 / Et1/99).